Here is a 327-residue protein sequence, read N- to C-terminus: Thiamine thiazole synthase (327 aa).

Residues cysteine 86, 107–108 (EA), glycine 115, and valine 182 each bind substrate. 2,3-didehydroalanine (Cys) is present on cysteine 216. Substrate contacts are provided by residues aspartate 218, histidine 233, methionine 285, and 295–297 (RMG).

It belongs to the THI4 family. In terms of assembly, homooctamer. Requires Fe cation as cofactor. Post-translationally, during the catalytic reaction, a sulfide is transferred from Cys-216 to a reaction intermediate, generating a dehydroalanine residue.

Its subcellular location is the cytoplasm. The protein localises to the nucleus. It catalyses the reaction [ADP-thiazole synthase]-L-cysteine + glycine + NAD(+) = [ADP-thiazole synthase]-dehydroalanine + ADP-5-ethyl-4-methylthiazole-2-carboxylate + nicotinamide + 3 H2O + 2 H(+). Its function is as follows. Involved in biosynthesis of the thiamine precursor thiazole. Catalyzes the conversion of NAD and glycine to adenosine diphosphate 5-(2-hydroxyethyl)-4-methylthiazole-2-carboxylic acid (ADT), an adenylated thiazole intermediate. The reaction includes an iron-dependent sulfide transfer from a conserved cysteine residue of the protein to a thiazole intermediate. The enzyme can only undergo a single turnover, which suggests it is a suicide enzyme. May have additional roles in adaptation to various stress conditions and in DNA damage tolerance. In Aspergillus oryzae (strain ATCC 42149 / RIB 40) (Yellow koji mold), this protein is Thiamine thiazole synthase.